A 595-amino-acid chain; its full sequence is Aspartate--tRNA(Asp/Asn) ligase (595 aa).

L-aspartate is bound at residue Glu178. Positions Gln202–Lys205 are aspartate. Arg224 is a binding site for L-aspartate. Residues Arg224–Glu226 and Gln233 contribute to the ATP site. His458 contributes to the L-aspartate binding site. Position 488 (Glu488) interacts with ATP. Arg495 lines the L-aspartate pocket. An ATP-binding site is contributed by Gly540 to Arg543.

Belongs to the class-II aminoacyl-tRNA synthetase family. Type 1 subfamily. As to quaternary structure, homodimer.

It localises to the cytoplasm. The enzyme catalyses tRNA(Asx) + L-aspartate + ATP = L-aspartyl-tRNA(Asx) + AMP + diphosphate. In terms of biological role, aspartyl-tRNA synthetase with relaxed tRNA specificity since it is able to aspartylate not only its cognate tRNA(Asp) but also tRNA(Asn). Reaction proceeds in two steps: L-aspartate is first activated by ATP to form Asp-AMP and then transferred to the acceptor end of tRNA(Asp/Asn). This is Aspartate--tRNA(Asp/Asn) ligase from Acaryochloris marina (strain MBIC 11017).